Consider the following 119-residue polypeptide: NADH-quinone oxidoreductase subunit A (119 aa).

3 helical membrane-spanning segments follow: residues 7 to 27 (FPVLIFIIFGVVLGIALMSIG), 63 to 83 (LIAILFILFDLETAFLFPWGV), and 88 to 108 (IGWPGFIAMGVFLLEFIVGFV).

The protein belongs to the complex I subunit 3 family. As to quaternary structure, NDH-1 is composed of 14 different subunits. Subunits NuoA, H, J, K, L, M, N constitute the membrane sector of the complex.

The protein localises to the cell inner membrane. The enzyme catalyses a quinone + NADH + 5 H(+)(in) = a quinol + NAD(+) + 4 H(+)(out). In terms of biological role, NDH-1 shuttles electrons from NADH, via FMN and iron-sulfur (Fe-S) centers, to quinones in the respiratory chain. The immediate electron acceptor for the enzyme in this species is believed to be ubiquinone. Couples the redox reaction to proton translocation (for every two electrons transferred, four hydrogen ions are translocated across the cytoplasmic membrane), and thus conserves the redox energy in a proton gradient. This chain is NADH-quinone oxidoreductase subunit A, found in Cupriavidus pinatubonensis (strain JMP 134 / LMG 1197) (Cupriavidus necator (strain JMP 134)).